The chain runs to 147 residues: Ribosome maturation factor RimP (147 aa).

The protein belongs to the RimP family.

The protein resides in the cytoplasm. Required for maturation of 30S ribosomal subunits. In Legionella pneumophila (strain Paris), this protein is Ribosome maturation factor RimP.